The chain runs to 946 residues: Glycine dehydrogenase (decarboxylating) (946 aa).

Lys-700 is modified (N6-(pyridoxal phosphate)lysine).

The protein belongs to the GcvP family. As to quaternary structure, the glycine cleavage system is composed of four proteins: P, T, L and H. Pyridoxal 5'-phosphate is required as a cofactor.

The enzyme catalyses N(6)-[(R)-lipoyl]-L-lysyl-[glycine-cleavage complex H protein] + glycine + H(+) = N(6)-[(R)-S(8)-aminomethyldihydrolipoyl]-L-lysyl-[glycine-cleavage complex H protein] + CO2. In terms of biological role, the glycine cleavage system catalyzes the degradation of glycine. The P protein binds the alpha-amino group of glycine through its pyridoxal phosphate cofactor; CO(2) is released and the remaining methylamine moiety is then transferred to the lipoamide cofactor of the H protein. The polypeptide is Glycine dehydrogenase (decarboxylating) (Pseudomonas fluorescens (strain SBW25)).